Reading from the N-terminus, the 130-residue chain is MSMQDPISDMLTRVRNGQSANKVAVKMPSSKLKVAIAALLKAEGYIADFAVEGDIKPELEITLKYFQAKPVIEQIQRVSRPGLRVYKKNDALPSVMGGLGIAVVSTSKGLMSDRAARKAGLGGEIICYVA.

This sequence belongs to the universal ribosomal protein uS8 family. Part of the 30S ribosomal subunit. Contacts proteins S5 and S12.

Functionally, one of the primary rRNA binding proteins, it binds directly to 16S rRNA central domain where it helps coordinate assembly of the platform of the 30S subunit. The protein is Small ribosomal subunit protein uS8 of Aliivibrio fischeri (strain MJ11) (Vibrio fischeri).